The sequence spans 334 residues: Syntaxin-18 (334 aa).

Residues 1–308 (MAVDITLLFR…EDIREAIKNN (308 aa)) are Cytoplasmic-facing. Disordered stretches follow at residues 29 to 50 (GGAD…GDFS) and 166 to 225 (LSKL…GEDE). Composition is skewed to basic and acidic residues over residues 33–50 (GSRD…GDFS) and 166–182 (LSKL…DSTS). The segment covering 183-192 (EKAPQNASQD) has biased composition (polar residues). Positions 193 to 207 (SEGKPAAEELPEKPL) are enriched in basic and acidic residues. In terms of domain architecture, t-SNARE coiled-coil homology spans 242–304 (IGEMNSLFDE…KEGNEDIREA (63 aa)). A helical; Anchor for type IV membrane protein membrane pass occupies residues 309-329 (AGFRVWILFFLVMCSFSLLFL). Residues 330 to 334 (DWYDS) lie on the Lumenal side of the membrane.

This sequence belongs to the syntaxin family. As to quaternary structure, component of a SNARE complex consisting of STX18, USE1L, BNIP1/SEC20L, and SEC22B. RINT1/TIP20L and ZW10 are associated with the complex through interaction with BNIP1/SEC20L. Interacts directly with USE1L and BNIP1/SEC20L.

It is found in the endoplasmic reticulum membrane. Its subcellular location is the golgi apparatus membrane. Syntaxin that may be involved in targeting and fusion of Golgi-derived retrograde transport vesicles with the ER. The protein is Syntaxin-18 (Stx18) of Mus musculus (Mouse).